The sequence spans 185 residues: MLTLASKLKRDDGVKGSRTTSTTLDSMRRISVRDRLLVKEVAELEANLPCTCKVNFPDPNKLHYFHLTVSPDESYYQGGRFQFEIEVPDAYNMVPPKVKCLTRIWHPNITETGEICLSLLREHSIDGTGWAPTRTLKDVVWGLNSLFTDLLNFDDPLNIEAAEHHLRDKDEYRNKVEDYIKRYAR.

The tract at residues 1–21 (MLTLASKLKRDDGVKGSRTTS) is disordered. Positions 1–29 (MLTLASKLKRDDGVKGSRTTSTTLDSMRR) are interaction with uba3. The UBC core domain maps to 32-185 (VRDRLLVKEV…VEDYIKRYAR (154 aa)). Cys-116 serves as the catalytic Glycyl thioester intermediate.

It belongs to the ubiquitin-conjugating enzyme family. UBE2F subfamily.

The enzyme catalyses [E1 NEDD8-activating enzyme]-S-[NEDD8 protein]-yl-L-cysteine + [E2 NEDD8-conjugating enzyme]-L-cysteine = [E1 NEDD8-activating enzyme]-L-cysteine + [E2 NEDD8-conjugating enzyme]-S-[NEDD8-protein]-yl-L-cysteine.. It functions in the pathway protein modification; protein neddylation. In terms of biological role, accepts the ubiquitin-like protein NEDD8 from the UBA3-NAE1 E1 complex and catalyzes its covalent attachment to other proteins. Together with the E3 ubiquitin ligase rnf7/rbx2, specifically neddylates cullin-5 (cul5). Does not neddylate cul1, cul2, cul3, cul4a or cul4b. This chain is NEDD8-conjugating enzyme UBE2F (ube2f), found in Xenopus laevis (African clawed frog).